The primary structure comprises 396 residues: Polygalacturonase (396 aa).

An N-terminal signal peptide occupies residues 1-22 (MDLKFKVHFALVLLFLAHFGES). Asn-143, Asn-151, Asn-174, Asn-181, Asn-203, and Asn-208 each carry an N-linked (GlcNAc...) asparagine glycan. PbH1 repeat units follow at residues 172-198 (CKNL…HVSR) and 199-220 (SSSV…SVGD). Catalysis depends on Asp-213, which acts as the Proton donor. Cys-215 and Cys-232 are joined by a disulfide. His-236 is a catalytic residue. PbH1 repeat units lie at residues 252–273 (VVGV…RIKT), 282–303 (VNDV…VIDQ), and 316–356 (PSQV…EVGD). Asn-259 and Asn-294 each carry an N-linked (GlcNAc...) asparagine glycan. Residues 364–396 (KEGPAKSSCENIKPSLKGKQNPPVCTASAASSS) are disordered. The cysteines at positions 372 and 388 are disulfide-linked.

It belongs to the glycosyl hydrolase 28 family. In terms of tissue distribution, pollen.

The protein resides in the secreted. It localises to the cell wall. It carries out the reaction (1,4-alpha-D-galacturonosyl)n+m + H2O = (1,4-alpha-D-galacturonosyl)n + (1,4-alpha-D-galacturonosyl)m.. In terms of biological role, may function in depolymerizing pectin during pollen development, germination, and tube growth. This is Polygalacturonase (PG1) from Nicotiana tabacum (Common tobacco).